The chain runs to 469 residues: Glutamate--tRNA ligase (469 aa).

The 'HIGH' region motif lies at 11-21 (PSPTGFIHLGN). Residues 243-247 (KMSKR) carry the 'KMSKS' region motif. K246 is a binding site for ATP.

This sequence belongs to the class-I aminoacyl-tRNA synthetase family. Glutamate--tRNA ligase type 1 subfamily. As to quaternary structure, monomer.

The protein localises to the cytoplasm. The catalysed reaction is tRNA(Glu) + L-glutamate + ATP = L-glutamyl-tRNA(Glu) + AMP + diphosphate. In terms of biological role, catalyzes the attachment of glutamate to tRNA(Glu) in a two-step reaction: glutamate is first activated by ATP to form Glu-AMP and then transferred to the acceptor end of tRNA(Glu). In Burkholderia lata (strain ATCC 17760 / DSM 23089 / LMG 22485 / NCIMB 9086 / R18194 / 383), this protein is Glutamate--tRNA ligase.